We begin with the raw amino-acid sequence, 511 residues long: Probable DNA ligase (511 aa).

Residue Glu-209 coordinates ATP. The active-site N6-AMP-lysine intermediate is Lys-211. ATP is bound by residues Arg-216, Arg-231, Glu-260, Phe-299, Arg-371, and Lys-377.

This sequence belongs to the ATP-dependent DNA ligase family. Mg(2+) serves as cofactor.

It carries out the reaction ATP + (deoxyribonucleotide)n-3'-hydroxyl + 5'-phospho-(deoxyribonucleotide)m = (deoxyribonucleotide)n+m + AMP + diphosphate.. DNA ligase that seals nicks in double-stranded DNA during DNA replication, DNA recombination and DNA repair. The polypeptide is Probable DNA ligase (Mycolicibacterium gilvum (strain PYR-GCK) (Mycobacterium gilvum (strain PYR-GCK))).